A 139-amino-acid polypeptide reads, in one-letter code: Large-conductance mechanosensitive channel (139 aa).

The next 2 membrane-spanning stretches (helical) occupy residues Val14–Leu34 and Gly86–Ile106.

It belongs to the MscL family. As to quaternary structure, homopentamer.

The protein resides in the cell inner membrane. In terms of biological role, channel that opens in response to stretch forces in the membrane lipid bilayer. May participate in the regulation of osmotic pressure changes within the cell. The chain is Large-conductance mechanosensitive channel from Methylobacillus flagellatus (strain ATCC 51484 / DSM 6875 / VKM B-1610 / KT).